Reading from the N-terminus, the 375-residue chain is Quinolinate synthase (375 aa).

His47 and Ser64 together coordinate iminosuccinate. A [4Fe-4S] cluster-binding site is contributed by Cys110. Residues 144–146 (YVN) and Ser165 each bind iminosuccinate. A [4Fe-4S] cluster-binding site is contributed by Cys235. Iminosuccinate-binding positions include 261-263 (HPE) and Thr278. Residue Cys325 coordinates [4Fe-4S] cluster.

It belongs to the quinolinate synthase family. Type 3 subfamily. Requires [4Fe-4S] cluster as cofactor.

The protein localises to the cytoplasm. It carries out the reaction iminosuccinate + dihydroxyacetone phosphate = quinolinate + phosphate + 2 H2O + H(+). It participates in cofactor biosynthesis; NAD(+) biosynthesis; quinolinate from iminoaspartate: step 1/1. Functionally, catalyzes the condensation of iminoaspartate with dihydroxyacetone phosphate to form quinolinate. The polypeptide is Quinolinate synthase (Herpetosiphon aurantiacus (strain ATCC 23779 / DSM 785 / 114-95)).